We begin with the raw amino-acid sequence, 35 residues long: LPKPPLLPPPVPGLAPGLPPLPVPDPVPHPPKKPP.

Over residues 1-29 (LPKPPLLPPPVPGLAPGLPPLPVPDPVPH) the composition is skewed to pro residues. A disordered region spans residues 1-35 (LPKPPLLPPPVPGLAPGLPPLPVPDPVPHPPKKPP). 8 positions are modified to hydroxyproline: P5, P9, P10, P12, P16, P20, P31, and P35.

In terms of processing, O-glycosylated; contains pentose side chains at some or all of the hydroxyproline residues. Glycosylation is required for full antifungal activity.

Its function is as follows. Antimicrobial peptide. Inhibits elongation of hyphae in B.sorokiniana (IC(50)=3.8 uM) but has no effect on this process or on germination of conidia in a panel of other phytopathogenic fungi. At concentrations above 10 uM, has antibacterial activity. The protein is Peptide ToHyp2 of Taraxacum officinale (Common dandelion).